A 387-amino-acid chain; its full sequence is Protein-glutamate methylesterase/protein-glutamine glutaminase 1 (387 aa).

A Response regulatory domain is found at 18–136 (RVMVVDDSAV…EISGGTDFRH (119 aa)). Position 69 is a 4-aspartylphosphate (Asp-69). Residues 190–387 (PAAEERPDII…AYVLRSANKR (198 aa)) enclose the CheB-type methylesterase domain. Active-site residues include Ser-204, His-233, and Asp-329.

It belongs to the CheB family. Phosphorylated by CheA. Phosphorylation of the N-terminal regulatory domain activates the methylesterase activity.

Its subcellular location is the cytoplasm. The enzyme catalyses [protein]-L-glutamate 5-O-methyl ester + H2O = L-glutamyl-[protein] + methanol + H(+). It carries out the reaction L-glutaminyl-[protein] + H2O = L-glutamyl-[protein] + NH4(+). Involved in chemotaxis. Part of a chemotaxis signal transduction system that modulates chemotaxis in response to various stimuli. Catalyzes the demethylation of specific methylglutamate residues introduced into the chemoreceptors (methyl-accepting chemotaxis proteins or MCP) by CheR. Also mediates the irreversible deamidation of specific glutamine residues to glutamic acid. In Rhodospirillum rubrum (strain ATCC 11170 / ATH 1.1.1 / DSM 467 / LMG 4362 / NCIMB 8255 / S1), this protein is Protein-glutamate methylesterase/protein-glutamine glutaminase 1.